The chain runs to 288 residues: Protoheme IX farnesyltransferase (288 aa).

Helical transmembrane passes span 8–28 (ATKP…FLLA), 35–55 (YLIF…GCVL), 80–100 (ISIL…IYLL), 107–127 (LTML…TKCM), 132–152 (IYST…GYCA), 162–182 (LLLL…IAIL), 208–228 (IVIY…SGYT), 229–249 (TSYQ…YLAL), and 266–286 (FIFS…DSIF).

Belongs to the UbiA prenyltransferase family. Protoheme IX farnesyltransferase subfamily.

The protein resides in the cell membrane. It carries out the reaction heme b + (2E,6E)-farnesyl diphosphate + H2O = Fe(II)-heme o + diphosphate. It participates in porphyrin-containing compound metabolism; heme O biosynthesis; heme O from protoheme: step 1/1. Functionally, converts heme B (protoheme IX) to heme O by substitution of the vinyl group on carbon 2 of heme B porphyrin ring with a hydroxyethyl farnesyl side group. This Baumannia cicadellinicola subsp. Homalodisca coagulata protein is Protoheme IX farnesyltransferase.